Consider the following 1492-residue polypeptide: Putative leucine-rich repeat-containing protein DDB_G0290503 (1492 aa).

The PH domain occupies 2–111 (SILLEGYLEK…WIEGIKDAIK (110 aa)). LRR repeat units lie at residues 123-144 (LDGL…IKHL), 180-204 (IKSL…VEKL), 258-284 (QESL…QFEK), 329-351 (KNQF…SIVD), 352-375 (DKLK…EIDN), 389-413 (ISKI…SIDK), 439-462 (LEKL…ILEI), 519-543 (INEL…NQSS), 551-575 (LNQL…IIER), 579-603 (IDQL…NESS), 632-656 (INEL…NQSS), 728-752 (LDEL…NQSS), 806-830 (LKSL…NQDS), 831-855 (LDEL…NQSS), 895-919 (INEL…NESS), 927-951 (LIQL…IIER), 955-979 (LNQL…NQSS), 1013-1036 (NEKL…NESL), 1044-1068 (FENL…IIDV), 1138-1164 (LQDL…ELKE), and 1210-1232 (NAHL…GFNE). The disordered stretch occupies residues 1272 to 1292 (RSSSSSLHQQQQMISPDLSNS). Residues 1274–1286 (SSSSLHQQQQMIS) show a composition bias toward low complexity. LRR repeat units follow at residues 1424-1444 (SSEK…KYFF) and 1445-1468 (AIAR…IFDM).

The polypeptide is Putative leucine-rich repeat-containing protein DDB_G0290503 (Dictyostelium discoideum (Social amoeba)).